Here is a 352-residue protein sequence, read N- to C-terminus: Methylthioribose-1-phosphate isomerase (352 aa).

Residues 55 to 57 (RGA), R98, and Q201 each bind substrate. D242 functions as the Proton donor in the catalytic mechanism. 252 to 253 (NK) provides a ligand contact to substrate.

Belongs to the eIF-2B alpha/beta/delta subunits family. MtnA subfamily.

The catalysed reaction is 5-(methylsulfanyl)-alpha-D-ribose 1-phosphate = 5-(methylsulfanyl)-D-ribulose 1-phosphate. Its pathway is amino-acid biosynthesis; L-methionine biosynthesis via salvage pathway; L-methionine from S-methyl-5-thio-alpha-D-ribose 1-phosphate: step 1/6. In terms of biological role, catalyzes the interconversion of methylthioribose-1-phosphate (MTR-1-P) into methylthioribulose-1-phosphate (MTRu-1-P). The polypeptide is Methylthioribose-1-phosphate isomerase (Methylococcus capsulatus (strain ATCC 33009 / NCIMB 11132 / Bath)).